We begin with the raw amino-acid sequence, 280 residues long: Bifunctional protein FolD (280 aa).

NADP(+)-binding positions include 166–168 and serine 191; that span reads GRS.

This sequence belongs to the tetrahydrofolate dehydrogenase/cyclohydrolase family. As to quaternary structure, homodimer.

The enzyme catalyses (6R)-5,10-methylene-5,6,7,8-tetrahydrofolate + NADP(+) = (6R)-5,10-methenyltetrahydrofolate + NADPH. It carries out the reaction (6R)-5,10-methenyltetrahydrofolate + H2O = (6R)-10-formyltetrahydrofolate + H(+). It functions in the pathway one-carbon metabolism; tetrahydrofolate interconversion. Catalyzes the oxidation of 5,10-methylenetetrahydrofolate to 5,10-methenyltetrahydrofolate and then the hydrolysis of 5,10-methenyltetrahydrofolate to 10-formyltetrahydrofolate. In Marinomonas sp. (strain MWYL1), this protein is Bifunctional protein FolD.